We begin with the raw amino-acid sequence, 472 residues long: Excisase A (472 aa).

Residues 244 to 429 (EILSGITKFE…FSLDMRKLAI (186 aa)) enclose the Tyr recombinase domain. Residues Arg-287, Lys-317, Arg-384, and His-407 contribute to the active site. Tyr-416 functions as the O-(3'-phospho-DNA)-tyrosine intermediate in the catalytic mechanism.

It belongs to the XisA/XisC recombinase family.

In terms of biological role, essential for DNA excision. Site specific recombinase necessary for the excision of the 11 kb nifD element during heterocyst differentiation. In Nostoc sp. (strain PCC 7120 / SAG 25.82 / UTEX 2576), this protein is Excisase A (xisA).